A 395-amino-acid polypeptide reads, in one-letter code: Chorismate synthase (395 aa).

The NADP(+) site is built by R40 and R46. Residues 137–139 (RSS), G308, 323–327 (KPLPT), and R349 each bind FMN.

Belongs to the chorismate synthase family. As to quaternary structure, homotetramer. It depends on FMNH2 as a cofactor.

It catalyses the reaction 5-O-(1-carboxyvinyl)-3-phosphoshikimate = chorismate + phosphate. The protein operates within metabolic intermediate biosynthesis; chorismate biosynthesis; chorismate from D-erythrose 4-phosphate and phosphoenolpyruvate: step 7/7. Functionally, catalyzes the anti-1,4-elimination of the C-3 phosphate and the C-6 proR hydrogen from 5-enolpyruvylshikimate-3-phosphate (EPSP) to yield chorismate, which is the branch point compound that serves as the starting substrate for the three terminal pathways of aromatic amino acid biosynthesis. This reaction introduces a second double bond into the aromatic ring system. The chain is Chorismate synthase from Gloeobacter violaceus (strain ATCC 29082 / PCC 7421).